We begin with the raw amino-acid sequence, 45 residues long: Unknown protein from spots 23/28/205 of 2D-PAGE of thylakoid (45 aa).

The protein resides in the plastid. Its subcellular location is the chloroplast thylakoid. The sequence is that of Unknown protein from spots 23/28/205 of 2D-PAGE of thylakoid from Pisum sativum (Garden pea).